Here is a 120-residue protein sequence, read N- to C-terminus: uncharacterized protein (120 aa).

Residues 13 to 119 (VIDKDICKGM…YGLWMAANEE (107 aa)) form the PRD domain.

This is an uncharacterized protein from Escherichia coli (strain K12).